We begin with the raw amino-acid sequence, 365 residues long: Putative clathrin assembly protein At4g40080 (365 aa).

Residues 29–167 (NTKSKTLSFH…STSRIMGFFI (139 aa)) form the ENTH domain.

It is found in the membrane. Its subcellular location is the clathrin-coated pit. The protein localises to the golgi apparatus. The protein resides in the cytoplasmic vesicle. It localises to the clathrin-coated vesicle. The polypeptide is Putative clathrin assembly protein At4g40080 (Arabidopsis thaliana (Mouse-ear cress)).